Consider the following 226-residue polypeptide: Protein DEHYDRATION-INDUCED 19 (226 aa).

The segment at F158–A208 is disordered. The segment covering L196–R205 has biased composition (basic and acidic residues).

The protein belongs to the Di19 family.

This Oryza sativa subsp. japonica (Rice) protein is Protein DEHYDRATION-INDUCED 19 (DI19-1).